A 243-amino-acid chain; its full sequence is Triosephosphate isomerase (243 aa).

9-11 (NWK) is a substrate binding site. The active-site Electrophile is the H96. Catalysis depends on E165, which acts as the Proton acceptor. Residues G171, S204, and 225 to 226 (GG) contribute to the substrate site.

Belongs to the triosephosphate isomerase family. In terms of assembly, homodimer.

The protein resides in the cytoplasm. It carries out the reaction D-glyceraldehyde 3-phosphate = dihydroxyacetone phosphate. The protein operates within carbohydrate biosynthesis; gluconeogenesis. It participates in carbohydrate degradation; glycolysis; D-glyceraldehyde 3-phosphate from glycerone phosphate: step 1/1. Functionally, involved in the gluconeogenesis. Catalyzes stereospecifically the conversion of dihydroxyacetone phosphate (DHAP) to D-glyceraldehyde-3-phosphate (G3P). This Synechococcus sp. (strain CC9311) protein is Triosephosphate isomerase.